The following is a 197-amino-acid chain: ATP-dependent Clp protease proteolytic subunit 2 (197 aa).

Residue serine 101 is the Nucleophile of the active site. The active site involves histidine 126.

It belongs to the peptidase S14 family. In terms of assembly, fourteen ClpP subunits assemble into 2 heptameric rings which stack back to back to give a disk-like structure with a central cavity, resembling the structure of eukaryotic proteasomes.

The protein resides in the cytoplasm. The catalysed reaction is Hydrolysis of proteins to small peptides in the presence of ATP and magnesium. alpha-casein is the usual test substrate. In the absence of ATP, only oligopeptides shorter than five residues are hydrolyzed (such as succinyl-Leu-Tyr-|-NHMec, and Leu-Tyr-Leu-|-Tyr-Trp, in which cleavage of the -Tyr-|-Leu- and -Tyr-|-Trp bonds also occurs).. In terms of biological role, cleaves peptides in various proteins in a process that requires ATP hydrolysis. Has a chymotrypsin-like activity. Plays a major role in the degradation of misfolded proteins. This is ATP-dependent Clp protease proteolytic subunit 2 from Trichormus variabilis (strain ATCC 29413 / PCC 7937) (Anabaena variabilis).